Consider the following 502-residue polypeptide: Glycerol kinase (502 aa).

Thr13 is an ADP binding site. Positions 13, 14, and 15 each coordinate ATP. Thr13 lines the sn-glycerol 3-phosphate pocket. ADP is bound at residue Arg17. Sn-glycerol 3-phosphate-binding residues include Arg83, Glu84, Tyr136, and Asp246. Glycerol contacts are provided by Arg83, Glu84, Tyr136, Asp246, and Gln247. Residues Thr268 and Gly311 each coordinate ADP. ATP-binding residues include Thr268, Gly311, Gln315, and Gly412. ADP-binding residues include Gly412 and Asn416.

It belongs to the FGGY kinase family.

It catalyses the reaction glycerol + ATP = sn-glycerol 3-phosphate + ADP + H(+). Its pathway is polyol metabolism; glycerol degradation via glycerol kinase pathway; sn-glycerol 3-phosphate from glycerol: step 1/1. Inhibited by fructose 1,6-bisphosphate (FBP). Functionally, key enzyme in the regulation of glycerol uptake and metabolism. Catalyzes the phosphorylation of glycerol to yield sn-glycerol 3-phosphate. The polypeptide is Glycerol kinase (Francisella tularensis subsp. tularensis (strain WY96-3418)).